Consider the following 134-residue polypeptide: Urease subunit beta (134 aa).

It belongs to the urease beta subunit family. Heterotrimer of UreA (gamma), UreB (beta) and UreC (alpha) subunits. Three heterotrimers associate to form the active enzyme.

The protein resides in the cytoplasm. It carries out the reaction urea + 2 H2O + H(+) = hydrogencarbonate + 2 NH4(+). Its pathway is nitrogen metabolism; urea degradation; CO(2) and NH(3) from urea (urease route): step 1/1. In Staphylococcus saprophyticus subsp. saprophyticus (strain ATCC 15305 / DSM 20229 / NCIMB 8711 / NCTC 7292 / S-41), this protein is Urease subunit beta.